A 239-amino-acid polypeptide reads, in one-letter code: Ribose-5-phosphate isomerase A (239 aa).

Substrate contacts are provided by residues 40–43, 96–99, and 110–113; these read SGST, DGAD, and KGGG. Residue glutamate 119 is the Proton acceptor of the active site. Substrate is bound at residue lysine 137.

It belongs to the ribose 5-phosphate isomerase family. In terms of assembly, homodimer.

It catalyses the reaction aldehydo-D-ribose 5-phosphate = D-ribulose 5-phosphate. Its pathway is carbohydrate degradation; pentose phosphate pathway; D-ribose 5-phosphate from D-ribulose 5-phosphate (non-oxidative stage): step 1/1. In terms of biological role, catalyzes the reversible conversion of ribose-5-phosphate to ribulose 5-phosphate. The chain is Ribose-5-phosphate isomerase A from Methanococcus maripaludis (strain C5 / ATCC BAA-1333).